A 500-amino-acid chain; its full sequence is Type-2 serine--tRNA ligase (500 aa).

Ala-305 provides a ligand contact to L-serine. Residue Cys-307 coordinates Zn(2+). Arg-337 is a binding site for L-serine. ATP-binding positions include 337-339 and 348-349; these read RYE and RV. L-serine is bound by residues 354–356 and Gln-401; that span reads RIE. A Zn(2+)-binding site is contributed by Glu-356. Glu-430 serves as a coordination point for ATP. An L-serine-binding site is contributed by Asn-433. Cys-459 contributes to the Zn(2+) binding site. Arg-466 contributes to the ATP binding site.

This sequence belongs to the class-II aminoacyl-tRNA synthetase family. Type-2 seryl-tRNA synthetase subfamily. In terms of assembly, homodimer. The cofactor is Zn(2+).

The protein localises to the cytoplasm. It catalyses the reaction tRNA(Ser) + L-serine + ATP = L-seryl-tRNA(Ser) + AMP + diphosphate + H(+). It carries out the reaction tRNA(Sec) + L-serine + ATP = L-seryl-tRNA(Sec) + AMP + diphosphate + H(+). It functions in the pathway aminoacyl-tRNA biosynthesis; selenocysteinyl-tRNA(Sec) biosynthesis; L-seryl-tRNA(Sec) from L-serine and tRNA(Sec): step 1/1. In terms of biological role, catalyzes the attachment of serine to tRNA(Ser). Is also able to aminoacylate tRNA(Sec) with serine, to form the misacylated tRNA L-seryl-tRNA(Sec), which will be further converted into selenocysteinyl-tRNA(Sec). In Methanothrix thermoacetophila (strain DSM 6194 / JCM 14653 / NBRC 101360 / PT) (Methanosaeta thermophila), this protein is Type-2 serine--tRNA ligase.